Reading from the N-terminus, the 631-residue chain is Fusexin 1 (631 aa).

The N-terminal stretch at 1-19 (MRRAALILAFVLFIGLSSA) is a signal peptide. Residues 20 to 90 (TVTSADSITY…THQDSKLKYS (71 aa)) form a domain I N-terminus region. Over 20–537 (TVTSADSITY…NLFGGSGSGD (518 aa)) the chain is Extracellular. Residues 91–170 (TSTSDELRDI…KLATPAYIDN (80 aa)) are domain II N-terminus. Residues D112, S146, Y149, and D150 each contribute to the Ca(2+) site. C125 and C155 are disulfide-bonded. Positions 143–148 (SVTSPV) are fusion loop, required for fusogenic activity, not required for membrane surface localization. The domain I central section stretch occupies residues 171-224 (PDEIFTAKAELQAGDKTIQSATLSNGDAGDGTVTDLGDSKISWNGNLDLGASEP). The tract at residues 225–316 (ENSRVIALYS…KDSSLDTGSF (92 aa)) is domain II C-terminus. The segment at 317–348 (VYDTPELLSYPSFTVYVDAGENGYIEVTKPTG) is domain I C-terminus. Residues 349–455 (DPDIISTSST…SVSVTGIQQS (107 aa)) are domain III. Intrachain disulfides connect C389/C432, C457/C477, and C490/C506. The segment at 443-467 (DSTSVSVTGIQQSECNPGDQRREKN) is disordered. The domain IV, required for fusogenic activity stretch occupies residues 456–509 (ECNPGDQRREKNENDRWEIYTCQDNGLTYEYDVTCAEDEKAVAQGDNQFSCEKQ). The tract at residues 510 to 537 (DDDSGGGDNTGSDSGLFSNLFGGSGSGD) is stem. The helical transmembrane segment at 538-558 (LLTQVHTALSILAGLVAGFFG) threads the bilayer. Residues 559-590 (YRGARWIHGETDIKGGFKLESRNVSRVKRGSP) lie on the Cytoplasmic side of the membrane. The chain crosses the membrane as a helical span at residues 591–611 (VAGIVGAVLGFVVGYGVASVF). Position 612 (H612) is a topological domain, extracellular. The chain crosses the membrane as a helical span at residues 613 to 630 (PVVQIIVVLGIAVGLYYF). Residue R631 is a topological domain, cytoplasmic.

It belongs to the HAP2/GCS1 family. Fusexin 1 subfamily. Monomer in solution, crystallizes as a trimer in high salt (2.5 M NaCl, 0.2 M CaCl(2)). The trimer is stabilized by interdomain contacts and numerous Ca(2+) and Na(+) ions.

The protein localises to the cell surface. It is found in the cell membrane. Functionally, exhibits fusogenic activity. Mediates cell-cell fusion in mammalian cells when present in both cells (bilateral fusion). The sequence is that of Fusexin 1 from Uncultured archaeon.